An 898-amino-acid chain; its full sequence is Serine/threonine-protein kinase TAO3 (898 aa).

Residues 24 to 277 (FIGLHEIGHG…SAELLRHDFV (254 aa)) form the Protein kinase domain. Residues 30-38 (IGHGSFGAV) and lysine 53 contribute to the ATP site. Aspartate 147 acts as the Proton acceptor in catalysis. 2 disordered regions span residues 316 to 362 (TRNG…SQSS) and 405 to 425 (DEAG…VQSQ). A Phosphoserine; by ATM modification is found at serine 324. Serine 331, serine 343, serine 346, and serine 349 each carry phosphoserine. Residues 334–351 (GTSLNREMDSLGSNHSIP) are compositionally biased toward polar residues. Positions 352–362 (SMSVSTGSQSS) are enriched in low complexity. Threonine 357 is modified (phosphothreonine). The residue at position 359 (serine 359) is a Phosphoserine. The segment covering 405–416 (DEAGHGDPRPEP) has biased composition (basic and acidic residues). At serine 442 the chain carries Phosphoserine. Coiled-coil stretches lie at residues 452–502 (EQEN…THAN), 548–649 (FLES…HAML), and 754–879 (LKTL…DMES). Residues 565–596 (EEMNEDHSTPKKEKQERISKHKENLQHTQAEE) are disordered. Lysine 830 carries the N6-acetyllysine modification.

This sequence belongs to the protein kinase superfamily. STE Ser/Thr protein kinase family. STE20 subfamily. Self-associates. Interacts with ERN1 and TRAF2. Interaction with TRAF2 is facilitated under ER stress conditions, such as treatment with tunicamycin, and may promote TRAF2 phosphorylation. Interacts (via N-terminus) with STK25; the interaction promotes STK25 abundance at the level of protein expression and/or stability. In terms of processing, autophosphorylated. Phosphorylation at Ser-324 by ATM following DNA damage is required for activation of the p38/MAPK14 stress-activated MAPK cascade. Phosphorylated at Ser-324 and on Tyr residues during T cell activation. Phosphorylated by LRRK2.

The protein localises to the cytoplasm. The protein resides in the cell membrane. Its subcellular location is the membrane raft. It localises to the lipid droplet. The catalysed reaction is L-seryl-[protein] + ATP = O-phospho-L-seryl-[protein] + ADP + H(+). The enzyme catalyses L-threonyl-[protein] + ATP = O-phospho-L-threonyl-[protein] + ADP + H(+). Functionally, serine/threonine-protein kinase that acts as a regulator of the p38/MAPK14 stress-activated MAPK cascade and of the MAPK8/JNK cascade. In response to DNA damage, involved in the G2/M transition DNA damage checkpoint by activating the p38/MAPK14 stress-activated MAPK cascade, probably by mediating phosphorylation of upstream MAP2K3 and MAP2K6 kinases. Inhibits basal activity of the MAPK8/JNK cascade and diminishes its activation in response to epidermal growth factor (EGF). Positively regulates canonical T cell receptor (TCR) signaling by preventing early PTPN6/SHP1-mediated inactivation of LCK, ensuring sustained TCR signaling that is required for optimal activation and differentiation of T cells. Phosphorylates PTPN6/SHP1 on 'Thr-394', leading to its polyubiquitination and subsequent proteasomal degradation. Required for cell surface expression of metalloprotease ADAM10 on type 1 transitional B cells which is necessary for their NOTCH-mediated development into marginal zone B cells. Also required for the NOTCH-mediated terminal differentiation of splenic conventional type 2 dendritic cells. Positively regulates osteoblast differentiation by acting as an upstream activator of the JNK pathway. Promotes JNK signaling in hepatocytes and positively regulates hepatocyte lipid storage by inhibiting beta-oxidation and triacylglycerol secretion while enhancing lipid synthesis. Restricts age-associated inflammation by negatively regulating differentiation of macrophages and their production of pro-inflammatory cytokines. Plays a role in negatively regulating the abundance of regulatory T cells in white adipose tissue. This is Serine/threonine-protein kinase TAO3 (TAOK3) from Pongo abelii (Sumatran orangutan).